The following is a 413-amino-acid chain: Calmodulin-binding protein CmbB (413 aa).

6 FNIP repeats span residues 104-148, 149-192, 222-257, 258-301, 304-343, and 344-386; these read FNHP…LSDC, YNQA…LGKG, SLPP…FGDG, FNQP…FHQF, FSQT…FSEK, and YNHP…LNGY.

In terms of assembly, interacts with calmodulin in the presence of Ca(2+).

This is Calmodulin-binding protein CmbB from Dictyostelium discoideum (Social amoeba).